The sequence spans 609 residues: Glutamine--fructose-6-phosphate aminotransferase [isomerizing] (609 aa).

Cys2 (nucleophile; for GATase activity) is an active-site residue. The 218-residue stretch at 2-219 (CGIFGYIGAK…SGELAVVGLG (218 aa)) folds into the Glutamine amidotransferase type-2 domain. 2 consecutive SIS domains span residues 280-426 (ISEK…LKQT) and 458-599 (WAND…IDRP). Residue Lys604 is the For Fru-6P isomerization activity of the active site.

In terms of assembly, homodimer.

The protein resides in the cytoplasm. It catalyses the reaction D-fructose 6-phosphate + L-glutamine = D-glucosamine 6-phosphate + L-glutamate. Its function is as follows. Catalyzes the first step in hexosamine metabolism, converting fructose-6P into glucosamine-6P using glutamine as a nitrogen source. This Chlamydia caviae (strain ATCC VR-813 / DSM 19441 / 03DC25 / GPIC) (Chlamydophila caviae) protein is Glutamine--fructose-6-phosphate aminotransferase [isomerizing].